Here is a 359-residue protein sequence, read N- to C-terminus: MSLIPYALTRPFLFGMDAEAAHELTMDMLARGQRTPLQWAWSGEQVSDPVQLAGLTFPNRVGMAAGLDKNARCIDALGAMGFGFVEVGTVTPRAQPGNPKPRMFRLPEANALINRLGFNNEGLDAFLHNVRQSNHHARPGMRPMLLGLNIGKNATTPIEDATRDYLLCLEGVYPHADYVTVNISSPNTQNLRALQSDAALDGLLGAIAERRESLARQPEKATGRPRRVPIFVKIAPDLAEEQVAVIASTLQRHGMDGVIATNTTISRDAVQGLRHAEETGGLSGAPVREASNRVIRQLRHALGKDFPIIGVGGILSAEDAVEKIRAGADVVQIYTGLIYRGPALVPQVAKALRAMPRPA.

Residues 65–69 and Thr89 each bind FMN; that span reads AGLDK. Substrate is bound at residue Lys69. A substrate-binding site is contributed by 114–118; it reads NRLGF. The FMN site is built by Asn149 and Asn182. A substrate-binding site is contributed by Asn182. The active-site Nucleophile is Ser185. Residue Asn187 participates in substrate binding. FMN contacts are provided by Lys233 and Thr261. Residue 262–263 coordinates substrate; sequence NT. FMN is bound by residues Gly284, Gly313, and 334-335; that span reads YT.

The protein belongs to the dihydroorotate dehydrogenase family. Type 2 subfamily. Monomer. It depends on FMN as a cofactor.

The protein resides in the cell membrane. It catalyses the reaction (S)-dihydroorotate + a quinone = orotate + a quinol. The protein operates within pyrimidine metabolism; UMP biosynthesis via de novo pathway; orotate from (S)-dihydroorotate (quinone route): step 1/1. Its function is as follows. Catalyzes the conversion of dihydroorotate to orotate with quinone as electron acceptor. This chain is Dihydroorotate dehydrogenase (quinone), found in Paracidovorax citrulli (strain AAC00-1) (Acidovorax citrulli).